A 365-amino-acid polypeptide reads, in one-letter code: MNILKISKQTLRNNIKIIREYIGNAKMCFPVKANAYGHGIEDIVENTHDLVDFFAVANSLEAFRVTAVAKNPVLVFGVIYYEYIEKMISENIRVSIQDYEDIEKLEQIAKELDKKVYAHININTGMNRMGVNYNDACRTIQRAYESDWLILEGVYSHLACADNRDHPTNIKQKNRFDSIVKFTKGLSQDIICHLSNSYGFLGQKGICYDMVRPGILSYGFLPEFYVDRVIREIKPIARLLSKVVKIITLQEGEGVGYSLIYRGFEGEQLAVIPIGYGDGFPRELGDRGFVNINDVMYPMAGRMSMDGLTVSLGINEYDVKVGDTVELISAIPRNRNSAFSIAKQTNTIEYDIMSTLNDRIIRKII.

Catalysis depends on Lys-32, which acts as the Proton acceptor; specific for D-alanine. Lys-32 is modified (N6-(pyridoxal phosphate)lysine). Residue Arg-128 coordinates substrate. Catalysis depends on Tyr-257, which acts as the Proton acceptor; specific for L-alanine. Residue Met-305 coordinates substrate.

Belongs to the alanine racemase family. Requires pyridoxal 5'-phosphate as cofactor.

The catalysed reaction is L-alanine = D-alanine. It functions in the pathway amino-acid biosynthesis; D-alanine biosynthesis; D-alanine from L-alanine: step 1/1. Its function is as follows. Catalyzes the interconversion of L-alanine and D-alanine. May also act on other amino acids. The chain is Alanine racemase (alr) from Francisella tularensis subsp. mediasiatica (strain FSC147).